The following is a 123-amino-acid chain: MDVFSEYLAGIADPFHRERTEEVLTWIKNKYPNLHTEIKWNQPMFTDHGTFIIGFSVSKKHLAVAPEKVTIAHVEDDIVKAGYDYTEQLIRIPWNGPVDYTLLEKMIEFNILDKADCSTFWRK.

As to quaternary structure, homodimer, upon Fe(2+) binding. Interacts with the SufS/SufU complex. Interacts with CpfC. Fe(2+) is required as a cofactor.

The protein localises to the cytoplasm. Plays an essential role in iron intracellular trafficking to iron cofactor biogenesis systems including iron-sulfur cluster (Fe-S) or heme assembly. Promotes the biosynthesis of iron-sulfur clusters by delivering Fe to the complex composed of the cysteine desulfurase SufS and the zinc-dependent sulfurtransferase SufU. Also plays a critical role in coproporphyrin-dependent heme b biogenesis and thus provides an essential function for the bacterial global metabolism. The polypeptide is Intracellular iron chaperone frataxin (fra) (Bacillus subtilis (strain 168)).